Consider the following 224-residue polypeptide: uncharacterized protein (224 aa).

S-adenosyl-L-methionine is bound by residues Gly177, Ile197, and Leu206.

The protein belongs to the class IV-like SAM-binding methyltransferase superfamily. RNA methyltransferase TrmH family.

This is an uncharacterized protein from Archaeoglobus fulgidus (strain ATCC 49558 / DSM 4304 / JCM 9628 / NBRC 100126 / VC-16).